The following is a 905-amino-acid chain: MIDKYSSNLVPVNIEDEMKVSYLDYAMSVIVSRAIPDVRDGLKPVHRRIIYSMYEAGNHASKPYRKSARIVGDVMGKYHPHGDSAIYDSLVRMAQDFSLRLPLVDGQGNFGSMDGDAAAAMRYTESRMAKVAHKLVEDIDKGTVSFNINYDGSEEEPSVLPAMFPNLLVNGSGGIAVGMATNIPPHNLGEIIDACCLYIDNHDIEILDLLEVVKGPDFPTGSMILGISGIRSAYLTGRGSIIMRGKAEIENVGNSRQAIIITEIPYMVNKARLVEKIAEMVKEKRIEGISDLRDESNKNGIRIFIELKKDVVAEVVLNQIYACTQLQTNFGVIMLALKDGLPKVMNLKEVIAAFVSFREVVITNRTIYLLNKARDRAHILLGLTIAISNIDEIIYIIKASNDTNLAKQELMARQWEVLDILPLIKLVDDKVILNERGTLSFTEVQAKAILEMKLQRLTAMEKEKLEQDLKHLATDIAEYLNILASRTRLLEILKEELIKVKEEFASPRLTSIEFGEFDQDIEDLIQREEMVVTVTLGGYIKRVPLSSYRSQKRGGKGRSGLSMRDEDITTQVFVGSTHTPMLFFSNIGKVYSLKLYKLPLSNPQGKGRPMVNILSLQENEHITNIMPLPENQDEWDHLNIMFATAKGNIRRSDLLDFKKIQSNGKIAIRLDEDDKLIDVKPCKEDEHILLATKAGKALRFPVESLRIIKSRISDGVRGMKLAKEDSVISMTVLKGINSTKEDRDAYLTVPWEKRLEIAKGEEFNLEELGVNLNADSILEMANSEEFILTVTENGFGKRSSAYGYRITDRGGSGIINMDINDKTGLVVGVMPVKMDDELMLITNSGKLIRCKLESVRITGRNTSGVILFKLDDDEKVVSVSLIAETSESEEASELAEEGLENDVKV.

The region spanning 35–524 (IPDVRDGLKP…GEFDQDIEDL (490 aa)) is the Topo IIA-type catalytic domain. The active-site O-(5'-phospho-DNA)-tyrosine intermediate is the tyrosine 123. Residues 551–557 (QKRGGKG) carry the GyrA-box motif.

It belongs to the type II topoisomerase GyrA/ParC subunit family. As to quaternary structure, heterotetramer, composed of two GyrA and two GyrB chains. In the heterotetramer, GyrA contains the active site tyrosine that forms a transient covalent intermediate with DNA, while GyrB binds cofactors and catalyzes ATP hydrolysis.

It is found in the cytoplasm. It catalyses the reaction ATP-dependent breakage, passage and rejoining of double-stranded DNA.. Functionally, a type II topoisomerase that negatively supercoils closed circular double-stranded (ds) DNA in an ATP-dependent manner to modulate DNA topology and maintain chromosomes in an underwound state. Negative supercoiling favors strand separation, and DNA replication, transcription, recombination and repair, all of which involve strand separation. Also able to catalyze the interconversion of other topological isomers of dsDNA rings, including catenanes and knotted rings. Type II topoisomerases break and join 2 DNA strands simultaneously in an ATP-dependent manner. This chain is DNA gyrase subunit A, found in Rickettsia prowazekii (strain Madrid E).